A 489-amino-acid chain; its full sequence is Homoserine O-acetyltransferase (489 aa).

The 308-residue stretch at 47–354 (NAILVCHALT…NYGHDSFLLE (308 aa)) folds into the AB hydrolase-1 domain. Catalysis depends on S152, which acts as the Nucleophile. A substrate-binding site is contributed by R221. Catalysis depends on residues D315 and H348. Residue D349 coordinates substrate. 2 consecutive CBS domains span residues 375 to 434 (MIED…NLEE) and 436 to 489 (MTKN…IEEF).

This sequence belongs to the AB hydrolase superfamily. MetX family. Homodimer.

Its subcellular location is the cytoplasm. The catalysed reaction is L-homoserine + acetyl-CoA = O-acetyl-L-homoserine + CoA. Its pathway is amino-acid biosynthesis; L-methionine biosynthesis via de novo pathway; O-acetyl-L-homoserine from L-homoserine: step 1/1. In terms of biological role, transfers an acetyl group from acetyl-CoA to L-homoserine, forming acetyl-L-homoserine. The sequence is that of Homoserine O-acetyltransferase from Methanohalobium evestigatum (strain ATCC BAA-1072 / DSM 3721 / NBRC 107634 / OCM 161 / Z-7303).